The following is a 557-amino-acid chain: Formate--tetrahydrofolate ligase (557 aa).

66-73 (TPAGEGKS) contacts ATP.

Belongs to the formate--tetrahydrofolate ligase family.

The catalysed reaction is (6S)-5,6,7,8-tetrahydrofolate + formate + ATP = (6R)-10-formyltetrahydrofolate + ADP + phosphate. It participates in one-carbon metabolism; tetrahydrofolate interconversion. The sequence is that of Formate--tetrahydrofolate ligase from Clostridium botulinum (strain ATCC 19397 / Type A).